The chain runs to 310 residues: Signal peptidase I (310 aa).

The chain crosses the membrane as a helical span at residues 5-25; the sequence is LSSFLLASSLITGTLWIINKI. Over 26–57 the chain is Cytoplasmic; sequence LSHNLLDSKIPFNIKKSKIYYKSKQVVQTFAS. Residues 58–78 form a helical membrane-spanning segment; that stretch reads FFPILIIVFIIRTFICEPFQI. Residues 79–310 are Extracellular-facing; it reads PSESMMPTLL…IQFDRIGNIY (232 aa). Catalysis depends on residues Ser82 and Lys137.

Belongs to the peptidase S26 family.

It is found in the cell membrane. The catalysed reaction is Cleavage of hydrophobic, N-terminal signal or leader sequences from secreted and periplasmic proteins.. The sequence is that of Signal peptidase I (lepB) from Buchnera aphidicola subsp. Baizongia pistaciae (strain Bp).